Here is a 324-residue protein sequence, read N- to C-terminus: MSQDQESPRCTHDQHLQTFSETQSLEVAQVSKALEKTLLSSSHPLVPGKLKEAPAAKAESPLEVPQSFCSSSIAVTTTSSSESDEASSNQEEEDSPSSSEDTSDPRNVPADALDQKVAFLVNFMLHKCQMKKPITKADMLKIIIKDDESHFSEILLRASEHLEMIFGLDVVEVDPTTHCYGLFIKLGLTYDGMLSGEKGVPKTGLLIIVLGVIFMKGNRATEEEVWEVLNLTGVYSGKKHFIFGEPRMLITKDFVKEKYLEYQQVANSDPARYEFLWGPRAKAETSKMKVLEFVAKVHGSYPHSFPSQYAEALKEEEERARARI.

The segment covering Met-1–His-15 has biased composition (basic and acidic residues). Disordered stretches follow at residues Met-1–Thr-22 and Leu-39–Val-108. Over residues Ser-70–Ser-81 the composition is skewed to low complexity. Residues Glu-82 to Ser-95 show a composition bias toward acidic residues. The 200-residue stretch at Leu-113–Ala-312 folds into the MAGE domain.

This Homo sapiens (Human) protein is Melanoma-associated antigen B16 (MAGEB16).